The primary structure comprises 157 residues: Protein Smg (157 aa).

The protein belongs to the Smg family.

This is Protein Smg from Yersinia pestis (strain Pestoides F).